The chain runs to 137 residues: Large ribosomal subunit protein uL16 (137 aa).

This sequence belongs to the universal ribosomal protein uL16 family. Part of the 50S ribosomal subunit.

Functionally, binds 23S rRNA and is also seen to make contacts with the A and possibly P site tRNAs. This chain is Large ribosomal subunit protein uL16, found in Mesoplasma florum (strain ATCC 33453 / NBRC 100688 / NCTC 11704 / L1) (Acholeplasma florum).